Reading from the N-terminus, the 546-residue chain is Chaperonin GroEL 1 (546 aa).

Residues 30–33 (TLGP), Lys-51, 87–91 (DGTTT), Gly-415, 479–481 (NAA), and Asp-495 contribute to the ATP site. Residues 526 to 546 (KEDAPMPGGMPGGMGGMGMDM) are disordered. The segment covering 534–546 (GMPGGMGGMGMDM) has biased composition (gly residues).

The protein belongs to the chaperonin (HSP60) family. In terms of assembly, forms a cylinder of 14 subunits composed of two heptameric rings stacked back-to-back. Interacts with the co-chaperonin GroES.

It is found in the cytoplasm. The catalysed reaction is ATP + H2O + a folded polypeptide = ADP + phosphate + an unfolded polypeptide.. Its function is as follows. Together with its co-chaperonin GroES, plays an essential role in assisting protein folding. The GroEL-GroES system forms a nano-cage that allows encapsulation of the non-native substrate proteins and provides a physical environment optimized to promote and accelerate protein folding. The protein is Chaperonin GroEL 1 of Burkholderia cenocepacia (strain HI2424).